The primary structure comprises 445 residues: Aminopeptidase S (445 aa).

The N-terminal stretch at 1-45 (MRPNRFSLRRSPTAVAAVALAAVLAAGAPAAQAAGAAAPTAAAAA) is a signal peptide. Ca(2+) is bound by residues Asp-48 and Ile-49. Residues His-130 and Asp-142 each coordinate Zn(2+). Glu-176 acts as the Proton acceptor in catalysis. 3 residues coordinate Zn(2+): Glu-177, Asp-205, and His-292. A disulfide bond links Cys-290 and Cys-295. Residues Asp-307 and Asp-311 each contribute to the Ca(2+) site. The 121-residue stretch at 325–445 (GEPPTGEGVF…GYIDSWKLTF (121 aa)) folds into the P/Homo B domain. Residues 330-445 (GEGVFSNTTD…GYIDSWKLTF (116 aa)) constitute a propeptide, removed in mature form.

This sequence belongs to the peptidase M28 family. M28A subfamily. As to quaternary structure, monomer. Ca(2+) is required as a cofactor. The cofactor is Zn(2+). Mn(2+) serves as cofactor. Requires Co(2+) as cofactor.

Its subcellular location is the secreted. It carries out the reaction Release of an N-terminal amino acid with a preference for large hydrophobic amino-terminus residues.. Calcium activates the enzyme, inhibited by 1,10-phenanthroline, EDTA and EGTA. End-product inhibited by L-amino acids. Non-competitively inhibited by NaF and NaH(2)PO(4). Functionally, an exopeptidase specific for larger hydrophobic amino acids (especially leucine), no cleavage occurs if the next residue is proline. This Streptomyces griseus subsp. griseus (strain JCM 4626 / CBS 651.72 / NBRC 13350 / KCC S-0626 / ISP 5235) protein is Aminopeptidase S.